We begin with the raw amino-acid sequence, 544 residues long: Putative lipase ATG15 (544 aa).

The Cytoplasmic portion of the chain corresponds to 1–45; sequence MVADFDSGWYEGAGDELGQGARNGVLRERLGGNEKAQVVRSRRKA. Residues 46-66 traverse the membrane as a helical; Signal-anchor for type II membrane protein segment; that stretch reads VAWNVLMVLGLILYVLYSACF. Topologically, residues 67-544 are lumenal; the sequence is AQARQWWRTN…NWFGYCTEYA (478 aa). 3 N-linked (GlcNAc...) asparagine glycosylation sites follow: Asn-200, Asn-229, and Asn-234. The Charge relay system role is filled by Ser-362. Positions 508–530 are disordered; sequence PMPSSVASKPTPTPTSPGSPSST.

This sequence belongs to the AB hydrolase superfamily. Lipase family. As to quaternary structure, binds to both phosphatidylinositol (PI) and phosphatidylinositol 3,5-bisphosphate (PIP2).

It localises to the endosome. Its subcellular location is the multivesicular body membrane. The protein resides in the prevacuolar compartment membrane. It catalyses the reaction a triacylglycerol + H2O = a diacylglycerol + a fatty acid + H(+). Functionally, lipase which is essential for lysis of subvacuolar cytoplasm to vacuole targeted bodies and intravacuolar autophagic bodies. Involved in the lysis of intravacuolar multivesicular body (MVB) vesicles. The intravacuolar membrane disintegration by ATG15 is critical to life span extension. The protein is Putative lipase ATG15 (ATG15) of Eremothecium gossypii (strain ATCC 10895 / CBS 109.51 / FGSC 9923 / NRRL Y-1056) (Yeast).